The sequence spans 226 residues: uncharacterized protein (226 aa).

The 112-residue stretch at 1–112 folds into the Response regulatory domain; it reads MLVEDDHSIS…ELTARVKAAI (112 aa). Position 48 is a 4-aspartylphosphate (Asp-48). The segment at residues 126-225 is a DNA-binding region (ompR/PhoB-type); sequence NKVIRIHQLA…LWGIGYKLGE (100 aa).

In terms of processing, phosphorylated by YcbM.

The protein localises to the cytoplasm. In terms of biological role, member of the two-component regulatory system YcbM/YcbL. This is an uncharacterized protein from Bacillus subtilis (strain 168).